The following is a 1185-amino-acid chain: Calmodulin-binding transcription activator homolog 1 (1185 aa).

The segment at residues 72 to 200 is a DNA-binding region (CG-1); sequence AVELFPCFKD…YLNVKTNNKI (129 aa). Disordered regions lie at residues 252–277 and 390–411; these read GVNL…RRNS and KIRS…VTST. The segment covering 393–411 has biased composition (low complexity); sequence SGSQESPMGPPSSSSVTST. The region spanning 418-498 is the IPT/TIG domain; sequence EMTPSSSSLK…ISTASEFTYE (81 aa). An ANK repeat occupies 616–646; that stretch reads DGSTPLHTACKNSASRIARLIISIDSSAIDV. An IQ domain is found at 957–984; it reads EAAMVIQRAYRVYRARSTTRRQEDIERR. Residues 1121 to 1185 form a disordered region; it reads CPQTSGDQRN…KPPYGCGTLA (65 aa). Residues 1128 to 1147 are compositionally biased toward basic and acidic residues; that stretch reads QRNKRDSDGERKRDAHHDAP.

This sequence belongs to the CAMTA family. As to quaternary structure, may interact with calmodulin. Expressed broadly in the nervous system.

It is found in the nucleus. Functionally, transcription factor. Positively modulates neuronal levels of the ubiquitous Ca2+ sensor calmodulin/cmd-1, probably by direct binding to the cmd-1 promoter, thereby regulating Ca2+ signaling, physiology, and behavior. This Caenorhabditis elegans protein is Calmodulin-binding transcription activator homolog 1.